The chain runs to 43 residues: Disintegrin CV (43 aa).

4 disulfide bridges follow: C1–C10, C6–C29, C7–C34, and C19–C36. Residues 1–43 (CTTGPCCRQCKLKPAGTTCWRTSVSSHYCTGRSCECPSYPGNG) enclose the Disintegrin domain. A Cell attachment site; atypical (RTS) motif is present at residues 21–23 (RTS).

It belongs to the disintegrin family. Short disintegrin subfamily. In terms of assembly, monomer. As to expression, expressed by the venom gland.

The protein resides in the secreted. Specifically interacts with the alpha-1/beta-1 integrin (ITGA1/ITGB1). Exhibits highly inhibitory effects on cell adhesion and cell migration to collagens I and IV. Also shows in vivo anti-angiogenic activity. This Cerastes vipera (Sahara sand viper) protein is Disintegrin CV.